The primary structure comprises 2812 residues: Zonadhesin (2812 aa).

A signal peptide spans 1–17 (MVPPVWTLLLLVGAALF). At 18–2757 (RKEKPPDQKL…DAPPPRKPAS (2740 aa)) the chain is on the extracellular side. 3 consecutive MAM domains span residues 39–204 (TQCD…SCNR), 209–368 (QTCS…PCGE), and 371–536 (PQCD…TCPV). The interval 61-84 (EDWVRASGPSPTGSTGAPGGYPNG) is disordered. Over residues 66–75 (ASGPSPTGST) the composition is skewed to low complexity. 2 N-linked (GlcNAc...) asparagine glycosylation sites follow: Asn333 and Asn493. Disordered stretches follow at residues 545–884 (VSPV…PTEK) and 904–929 (EKPT…KPTI). Residues 547–558 (PVSSTGPSETTG) show a composition bias toward low complexity. Positions 559-570 (LTENPTISTKKP) are enriched in polar residues. The 66 X heptapeptide repeats (approximate) (mucin-like domain) stretch occupies residues 573-1041 (SIEKPSVTTE…GTTTTSRSST (469 aa)). Composition is skewed to low complexity over residues 592 to 603 (TIPTEKPTISTE), 651 to 675 (TEKP…MEEP), 713 to 842 (SPEK…STEK), 853 to 868 (STEK…TISP), and 916 to 929 (STEK…KPTI). In terms of domain architecture, TIL 1 spans 1044–1093 (CPPNARYESCACPASCKSPRPSCGPLCREGCVCNPGFLFSDNHCIQASSC). Residues 1103-1148 (EPGAEWFSPNCTEHCRCWPGSRVECQISQCGTHTVCQLKNGQYGCH) enclose the VWFC 1 domain. 2 N-linked (GlcNAc...) asparagine glycosylation sites follow: Asn1112 and Asn1188. Residues 1154 to 1331 (ATCLVYGDPH…TDQDEDQECQ (178 aa)) form the VWFD 1 domain. Disulfide bonds link Cys1156/Cys1291 and Cys1178/Cys1330. A compositionally biased stretch (basic and acidic residues) spans 1302 to 1316 (HLKLDGSPAGDKEEL). Positions 1302–1323 (HLKLDGSPAGDKEELGNSWQTD) are disordered. The region spanning 1426–1479 (CPPNSKYSLCAKPCPDTCHSGFSGMFCSDRCVEACECNPGFVLSGLECIPRSQC) is the TIL 2 domain. The VWFC 2 domain maps to 1480–1535 (GCLHPAGSYFKVGERWYKPGCKELCVCESNNRIRCQPWRCRAQEFCGQQDGIYGCH). Residues 1540-1720 (ATCTASGDPH…LPESSEPGCF (181 aa)) enclose the VWFD 2 domain. 2 disulfide bridges follow: Cys1542/Cys1680 and Cys1564/Cys1719. Residues Asn1685 and Asn1804 are each glycosylated (N-linked (GlcNAc...) asparagine). A TIL 3 domain is found at 1812 to 1867 (CPPGSSYSPCSSPCPDTCSSINNPRDCPKALPCAESCECQKGHILSGTSCVPLGQC). The 57-residue stretch at 1868–1924 (GCTDPAGSYHPVGERWYTENTCTRLCTCSVHNNITCFQSTCKPNQICWALDGLLHCR) folds into the VWFC 3 domain. Asn1900 and Asn1946 each carry an N-linked (GlcNAc...) asparagine glycan. Positions 1929–2108 (GVCQLPGESH…KDKDIDPSCQ (180 aa)) constitute a VWFD 3 domain. 2 disulfides stabilise this stretch: Cys1931–Cys2069 and Cys1953–Cys2107. The N-linked (GlcNAc...) asparagine glycan is linked to Asn2203. The region spanning 2211 to 2267 (CPAYSSYTNCLPSCSPSCWDLDGRCEGAKVPSACAEGCICQPGYVLSEDKCVPRSQC) is the TIL 4 domain. The 62-residue stretch at 2268 to 2329 (GCKDAHGGSI…NSNCVSDKSE (62 aa)) folds into the VWFC 4 domain. One can recognise a VWFD 4 domain in the interval 2329-2505 (EQCSVYGDPR…SWEVKTEDAL (177 aa)). Cys2331 and Cys2468 form a disulfide bridge. Residues Asn2542 and Asn2701 are each glycosylated (N-linked (GlcNAc...) asparagine). Positions 2652 to 2797 (CGCTSNGIYY…KREKTQEGDR (146 aa)) constitute a VWFC 5 domain. The 37-residue stretch at 2708–2744 (PESPCLQNPCQNDGQCREQGATFTCECEVGYGGGLCM) folds into the EGF-like domain. Cystine bridges form between Cys2712–Cys2723, Cys2717–Cys2732, and Cys2734–Cys2743. Residues 2758-2778 (NLVGVLLGLLVPVVVVLLAVT) form a helical membrane-spanning segment. The Cytoplasmic segment spans residues 2779 to 2812 (RECIYRTRRKREKTQEGDRLARLVDTDTVLDCAC).

As to quaternary structure, probably forms covalent oligomers. In testis, primarily in haploid spermatids.

It localises to the cell membrane. Its function is as follows. Binds in a species-specific manner to the zona pellucida of the egg. May be involved in gamete recognition and/or signaling. This is Zonadhesin (ZAN) from Homo sapiens (Human).